Here is a 1026-residue protein sequence, read N- to C-terminus: Exportin-T (1026 aa).

Belongs to the exportin family.

Its subcellular location is the nucleus. The protein resides in the cytoplasm. Functionally, tRNA nucleus export receptor which facilitates tRNA translocation across the nuclear pore complex. Involved in pre-tRNA splicing, probably by affecting the interaction of pre-tRNA with splicing endonuclease. This Aspergillus oryzae (strain ATCC 42149 / RIB 40) (Yellow koji mold) protein is Exportin-T (los1).